We begin with the raw amino-acid sequence, 294 residues long: MEEYTKAEILIEALPYICKFHDQKVLIKYGGHAMVNEQAKNWIAKDLVLLKYVGINPIVVHGGGPEINRAMEKMGKTPEFIHGLRVTDEETLEIVKMVLIGKINGDIVSKLELYGGKAVGLSGKSGQLIKAKKKIQYLMKDSQKIEVDLGMVGEVEHVDTKLIDILVEKRYIPVISPIGVDHQGNDLNLNADIAAGDIAGAMNAEKLIMVTDVDGIMDDIKDPSTLHRKLTISQIEGMIERGLITGGMIPKIEACINALDKGVQSVHIVNGKTPHAVLLEIFTEDGVGTMVVRE.

Substrate is bound by residues 63-64, R85, and N188; that span reads GG.

The protein belongs to the acetylglutamate kinase family. ArgB subfamily.

The protein localises to the cytoplasm. The enzyme catalyses N-acetyl-L-glutamate + ATP = N-acetyl-L-glutamyl 5-phosphate + ADP. Its pathway is amino-acid biosynthesis; L-arginine biosynthesis; N(2)-acetyl-L-ornithine from L-glutamate: step 2/4. In terms of biological role, catalyzes the ATP-dependent phosphorylation of N-acetyl-L-glutamate. This chain is Acetylglutamate kinase, found in Methanococcus maripaludis (strain C7 / ATCC BAA-1331).